A 64-amino-acid chain; its full sequence is Protein translocase subunit SecE (64 aa).

A helical transmembrane segment spans residues 35-55 (LVVLGTVAFITVFFAVVDYGI).

This sequence belongs to the SecE/SEC61-gamma family. As to quaternary structure, component of the Sec protein translocase complex. Heterotrimer consisting of SecY, SecE and SecG subunits. The heterotrimers can form oligomers, although 1 heterotrimer is thought to be able to translocate proteins. Interacts with the ribosome. Interacts with SecDF, and other proteins may be involved. Interacts with SecA.

It is found in the cell membrane. In terms of biological role, essential subunit of the Sec protein translocation channel SecYEG. Clamps together the 2 halves of SecY. May contact the channel plug during translocation. The protein is Protein translocase subunit SecE of Halalkalibacterium halodurans (strain ATCC BAA-125 / DSM 18197 / FERM 7344 / JCM 9153 / C-125) (Bacillus halodurans).